We begin with the raw amino-acid sequence, 519 residues long: Acetylcholine receptor subunit beta-like 2 (519 aa).

An N-terminal signal peptide occupies residues 1-18 (MWHWSLLCVFLLVPLANS). Topologically, residues 19-244 (TAPISFEANP…ITFKLTMRRK (226 aa)) are extracellular. A glycan (N-linked (GlcNAc...) asparagine) is linked at asparagine 50. Cysteine 154 and cysteine 168 are oxidised to a cystine. A run of 3 helical transmembrane segments spans residues 245 to 269 (TLFY…VFYL), 277 to 295 (VTLC…LLLA), and 311 to 332 (YLLF…VLNI). Over 333–462 (HFRSPSTHNM…WKFVSMVLDR (130 aa)) the chain is Cytoplasmic. Residues 463-481 (FFLWLFTLSCVFGTLAIIC) form a helical membrane-spanning segment.

The protein belongs to the ligand-gated ion channel (TC 1.A.9) family. Acetylcholine receptor (TC 1.A.9.1) subfamily. As to expression, CNS in embryos.

It localises to the postsynaptic cell membrane. It is found in the cell membrane. After binding acetylcholine, the AChR responds by an extensive change in conformation that affects all subunits and leads to opening of an ion-conducting channel across the plasma membrane. This Drosophila melanogaster (Fruit fly) protein is Acetylcholine receptor subunit beta-like 2 (nAChRbeta2).